Here is a 100-residue protein sequence, read N- to C-terminus: Urease subunit gamma (100 aa).

It belongs to the urease gamma subunit family. Probable heterotrimer of UreA (gamma), UreB (beta) and UreC (alpha) subunits. Three heterotrimers associate to form the active enzyme. The trimeric urease interacts with an accessory complex composed of UreD, UreF and UreG, which is required for the assembly of the nickel containing metallocenter of UreC. The UreE protein may also play a direct role in nickel transfer to the urease apoprotein.

It localises to the cytoplasm. The enzyme catalyses urea + 2 H2O + H(+) = hydrogencarbonate + 2 NH4(+). Its pathway is nitrogen metabolism; urea degradation; CO(2) and NH(3) from urea (urease route): step 1/1. The sequence is that of Urease subunit gamma from Proteus mirabilis (strain HI4320).